Consider the following 235-residue polypeptide: Lipoprotein-releasing system ATP-binding protein LolD (235 aa).

The ABC transporter domain maps to 5–235; that stretch reads LECRDIRKVY…LMTESASVEG (231 aa). Residue 41–48 coordinates ATP; it reads GSSGSGKS.

It belongs to the ABC transporter superfamily. Lipoprotein translocase (TC 3.A.1.125) family. The complex is composed of two ATP-binding proteins (LolD) and two transmembrane proteins (LolC and LolE).

Its subcellular location is the cell inner membrane. Part of the ABC transporter complex LolCDE involved in the translocation of mature outer membrane-directed lipoproteins, from the inner membrane to the periplasmic chaperone, LolA. Responsible for the formation of the LolA-lipoprotein complex in an ATP-dependent manner. The protein is Lipoprotein-releasing system ATP-binding protein LolD of Vibrio parahaemolyticus serotype O3:K6 (strain RIMD 2210633).